A 321-amino-acid polypeptide reads, in one-letter code: MATVFCKVGGGEEAVPKKEALNVINVIDQLPKPCPNPKFINRSMATKGLLLPSRRSLASFSEEENTDVMMHMPVEDSEYSSDDTSMSPIPSTLMNPIKMAVTQPNSSFFAGILEGELNKLSLASVVKNTEKDNLAICPRSSKSQIATRGLLDLDNPALDTDTSSTRSESSVVLDVPEVPFICEHTVGDSTAVISWTYAAGKQQVSFYQVLLQEATKPADKDTPKIKTRPWIFNKILGTTVKLMELKSNTSYCLTVRAANTAGVGKWCKPYKFATVSTDFNSFPETNPIQVTVQRKQPHRRTVSMTMEEMRRLEDLEYLYPY.

Residues 175 to 277 enclose the Fibronectin type-III domain; it reads VPEVPFICEH…KPYKFATVST (103 aa).

In Mus musculus (Mouse), this protein is Fibronectin type III domain-containing protein 8 (Fndc8).